Reading from the N-terminus, the 312-residue chain is DNA-directed RNA polymerase subunit alpha (312 aa).

The interval 1–226 is alpha N-terminal domain (alpha-NTD); that stretch reads MIEFEKPNIT…EHLNLFTNLT (226 aa). Residues 243–312 are alpha C-terminal domain (alpha-CTD); that stretch reads DDRILERTIE…DLGLGLKNDK (70 aa).

Belongs to the RNA polymerase alpha chain family. As to quaternary structure, homodimer. The RNAP catalytic core consists of 2 alpha, 1 beta, 1 beta' and 1 omega subunit. When a sigma factor is associated with the core the holoenzyme is formed, which can initiate transcription.

It catalyses the reaction RNA(n) + a ribonucleoside 5'-triphosphate = RNA(n+1) + diphosphate. In terms of biological role, DNA-dependent RNA polymerase catalyzes the transcription of DNA into RNA using the four ribonucleoside triphosphates as substrates. The chain is DNA-directed RNA polymerase subunit alpha from Streptococcus sanguinis (strain SK36).